The primary structure comprises 109 residues: UPF0060 membrane protein PA14_21660 (109 aa).

The next 4 helical transmembrane spans lie at 5–25 (LWFVLAAFCEIAGCYAFYLWL), 27–47 (LGKSALWVLPGLLSLTLFALL), 59–79 (AYAAYGGIYVAASLFWLAFVE), and 84–104 (LWSDWLGVALCVVGASVVLFG).

Belongs to the UPF0060 family.

It localises to the cell inner membrane. The chain is UPF0060 membrane protein PA14_21660 from Pseudomonas aeruginosa (strain UCBPP-PA14).